Consider the following 312-residue polypeptide: Pantothenate kinase (312 aa).

Residue 97 to 104 (GSVAVGKS) participates in ATP binding.

This sequence belongs to the prokaryotic pantothenate kinase family.

The protein resides in the cytoplasm. It carries out the reaction (R)-pantothenate + ATP = (R)-4'-phosphopantothenate + ADP + H(+). It participates in cofactor biosynthesis; coenzyme A biosynthesis; CoA from (R)-pantothenate: step 1/5. The protein is Pantothenate kinase of Mycobacterium marinum (strain ATCC BAA-535 / M).